We begin with the raw amino-acid sequence, 1067 residues long: Kinesin-like protein KIF11-A (1067 aa).

One can recognise a Kinesin motor domain in the interval 18–359 (NIQVVVRCRP…LDYASRAKNI (342 aa)). Residue 105–112 (GQTGTGKT) participates in ATP binding. Coiled coils occupy residues 365–480 (VNQK…QEAF), 692–721 (DSSS…HSEG), and 882–915 (QAQE…QVQS). Position 937 is a phosphothreonine; by CDK1 (threonine 937). The residue at position 1046 (serine 1046) is a Phosphoserine; by NEK6.

Belongs to the TRAFAC class myosin-kinesin ATPase superfamily. Kinesin family. BimC subfamily. In terms of assembly, heterotetramer of two heavy and two light chains. Interacts with aurka. Phosphorylation of Thr-937 during mitosis controls the association of this protein with the spindle apparatus. Post-translationally, a subset of this protein primarily localized at the spindle pole is phosphorylated by NEK6 during mitosis. In terms of processing, phosphorylated on a serine residue by aurka. As to expression, highly expressed in unfertilized eggs, especially in the germinal vesicle and in the radial yolk-poor channels. Also present in testis.

It localises to the cytoplasm. The protein resides in the cytoskeleton. Its subcellular location is the spindle pole. In terms of biological role, plus end-directed motor protein required for establishing a bipolar spindle. Associates with both interphase and spindle microtubules. May be involved in nuclear divisions taking place during the development of unfertilized eggs. Required in non-mitotic cells for transport of secretory proteins from the Golgi complex to the cell surface. The polypeptide is Kinesin-like protein KIF11-A (kif11-a) (Xenopus laevis (African clawed frog)).